The following is a 218-amino-acid chain: Insulin-induced gene 2 protein (218 aa).

The Cytoplasmic segment spans residues 1–21; the sequence is MGETDNAPRGPPSFLPHKMNL. Residues 22 to 44 form a helical membrane-spanning segment; the sequence is LLRGLLLFLIGVFLALVLNLLQV. The Lumenal segment spans residues 45 to 63; sequence QRNVTLFPPDVLSSLFSSA. The helical transmembrane segment at 64-81 threads the bilayer; that stretch reads WWVPLCCGTAAAAIGLLY. Topologically, residues 82-96 are cytoplasmic; sequence PCIDRHLGEPHKFKR. Residues 97–119 traverse the membrane as a helical segment; sequence EWSSVMRCVAVFVGINHASAKVD. The Lumenal segment spans residues 120 to 122; sequence FAN. Residues 123–141 form a helical membrane-spanning segment; sequence NTQLSLTLAALSIGLWWTF. Residues 142–146 lie on the Cytoplasmic side of the membrane; the sequence is DRSRS. A helical membrane pass occupies residues 147 to 168; sequence GLGLGIGISFFATVVSQLLVYN. The Lumenal portion of the chain corresponds to 169 to 182; it reads GVYEYTAPDFLYVR. The chain crosses the membrane as a helical span at residues 183–200; the sequence is SWLPCIFFAGGITMGNIG. Topologically, residues 201–218 are cytoplasmic; sequence RQLEMYERLALVEKSHRD. The short motif at 212–218 is the KxHxx element; sequence VEKSHRD.

Belongs to the INSIG family. Interacts with scap; interaction is direct and only takes place in the presence of sterols; it prevents interaction between scap and the coat protein complex II (COPII). Associates with the SCAP-SREBP complex; association is mediated via its interaction with scap and only takes place in the presence of sterols.

The protein localises to the endoplasmic reticulum membrane. Functionally, oxysterol-binding protein that mediates feedback control of cholesterol synthesis by controlling both endoplasmic reticulum to Golgi transport of scap and degradation of hmgcr. Acts as a negative regulator of cholesterol biosynthesis by mediating the retention of the SCAP-SREBP complex in the endoplasmic reticulum, thereby blocking the processing of sterol regulatory element-binding proteins (SREBPs). Binds oxysterol, including 22-hydroxycholesterol, 24-hydroxycholesterol, 25-hydroxycholesterol and 27-hydroxycholesterol, regulating interaction with scap and retention of the SCAP-SREBP complex in the endoplasmic reticulum. In presence of oxysterol, interacts with scap, retaining the SCAP-SREBP complex in the endoplasmic reticulum, thereby preventing scap from escorting SREBPs to the Golgi. Sterol deprivation reduce oxysterol-binding, disrupting the interaction between insig2 and scap, thereby promoting Golgi transport of the SCAP-SREBP complex, followed by processing and nuclear translocation of SREBPs. Also regulates cholesterol synthesis by regulating degradation of hmgcr. The chain is Insulin-induced gene 2 protein from Xenopus tropicalis (Western clawed frog).